Reading from the N-terminus, the 354-residue chain is UDP-N-acetylglucosamine--N-acetylmuramyl-(pentapeptide) pyrophosphoryl-undecaprenol N-acetylglucosamine transferase (354 aa).

UDP-N-acetyl-alpha-D-glucosamine contacts are provided by residues 13–15, Asn125, Ser189, Ile242, 261–266, and Gln286; these read SGG and ALTVSE.

Belongs to the glycosyltransferase 28 family. MurG subfamily.

It is found in the cell inner membrane. It carries out the reaction di-trans,octa-cis-undecaprenyl diphospho-N-acetyl-alpha-D-muramoyl-L-alanyl-D-glutamyl-meso-2,6-diaminopimeloyl-D-alanyl-D-alanine + UDP-N-acetyl-alpha-D-glucosamine = di-trans,octa-cis-undecaprenyl diphospho-[N-acetyl-alpha-D-glucosaminyl-(1-&gt;4)]-N-acetyl-alpha-D-muramoyl-L-alanyl-D-glutamyl-meso-2,6-diaminopimeloyl-D-alanyl-D-alanine + UDP + H(+). The protein operates within cell wall biogenesis; peptidoglycan biosynthesis. In terms of biological role, cell wall formation. Catalyzes the transfer of a GlcNAc subunit on undecaprenyl-pyrophosphoryl-MurNAc-pentapeptide (lipid intermediate I) to form undecaprenyl-pyrophosphoryl-MurNAc-(pentapeptide)GlcNAc (lipid intermediate II). The protein is UDP-N-acetylglucosamine--N-acetylmuramyl-(pentapeptide) pyrophosphoryl-undecaprenol N-acetylglucosamine transferase of Buchnera aphidicola subsp. Acyrthosiphon pisum (strain 5A).